The primary structure comprises 403 residues: Alkaline protease 1 (403 aa).

The signal sequence occupies residues 1-21 (MQSIKRTLLLLGALLPAALAA). Residues 22–125 (PAREPHPSSN…QIWYLDALTT (104 aa)) constitute a propeptide that is removed on maturation. Positions 36–120 (KYIITFKSGI…HVEEDQIWYL (85 aa)) constitute an Inhibitor I9 domain. Residues 130–403 (PWGLGSISHK…PNKLAYNGAA (274 aa)) form the Peptidase S8 domain. Catalysis depends on charge relay system residues Asp-162 and His-193. 2 N-linked (GlcNAc...) asparagine glycosylation sites follow: Asn-253 and Asn-307. The active-site Charge relay system is Ser-349.

The protein belongs to the peptidase S8 family.

The protein localises to the secreted. The catalysed reaction is Hydrolysis of proteins with broad specificity, and of Bz-Arg-OEt &gt; Ac-Tyr-OEt. Does not hydrolyze peptide amides.. Functionally, secreted alkaline protease that allows assimilation of proteinaceous substrates. This Aspergillus clavatus (strain ATCC 1007 / CBS 513.65 / DSM 816 / NCTC 3887 / NRRL 1 / QM 1276 / 107) protein is Alkaline protease 1 (alp1).